Reading from the N-terminus, the 101-residue chain is Signal recognition particle 19 kDa protein (101 aa).

This sequence belongs to the SRP19 family. In terms of assembly, part of the signal recognition particle protein translocation system, which is composed of SRP and FtsY. Archaeal SRP consists of a 7S RNA molecule of 300 nucleotides and two protein subunits: SRP54 and SRP19.

The protein resides in the cytoplasm. In terms of biological role, involved in targeting and insertion of nascent membrane proteins into the cytoplasmic membrane. Binds directly to 7S RNA and mediates binding of the 54 kDa subunit of the SRP. This chain is Signal recognition particle 19 kDa protein, found in Thermofilum pendens (strain DSM 2475 / Hrk 5).